The primary structure comprises 88 residues: uncharacterized protein (88 aa).

This is an uncharacterized protein from Bacillus subtilis (strain 168).